We begin with the raw amino-acid sequence, 241 residues long: Carboxy-S-adenosyl-L-methionine synthase (241 aa).

Residues Y38, 63-65 (GCS), 88-89 (DN), 116-117 (DI), N131, and R198 contribute to the S-adenosyl-L-methionine site.

The protein belongs to the class I-like SAM-binding methyltransferase superfamily. Cx-SAM synthase family. Homodimer.

It carries out the reaction prephenate + S-adenosyl-L-methionine = carboxy-S-adenosyl-L-methionine + 3-phenylpyruvate + H2O. Functionally, catalyzes the conversion of S-adenosyl-L-methionine (SAM) to carboxy-S-adenosyl-L-methionine (Cx-SAM). The polypeptide is Carboxy-S-adenosyl-L-methionine synthase (Mannheimia succiniciproducens (strain KCTC 0769BP / MBEL55E)).